Here is a 324-residue protein sequence, read N- to C-terminus: MIEFQKPTIRCEELSPDNKYGRYVIEPLERGYGITVGNALRRTLLSSLPGAAVTAVKIDGVLHEFSTIPGVLEDVPEIILNLKGLAIKMSSPGPKVMYIEAQGECEVKAKDIKADADIEICNPDHHIATLNQDARLFMEITVNQGKGYVLAERNKQPNQPIGVIPVDSIYTPVVKVNYKVENTRVGQVTDYDKLTMEIWTNGTIRPDEALTVAAKILIEHFNLFTDLSNIPTKIETVVKQEPPKRNKLLDMTIEELELSVRSYNCLKRAGINTVEDLVNKTEEEMMKVRNLGKKSLEEVIQKLHSLGLSLKKSDSTPKEEEEEK.

The alpha N-terminal domain (alpha-NTD) stretch occupies residues 1-228 (MIEFQKPTIR…EHFNLFTDLS (228 aa)). The segment at 245-324 (RNKLLDMTIE…STPKEEEEEK (80 aa)) is alpha C-terminal domain (alpha-CTD).

Belongs to the RNA polymerase alpha chain family. Homodimer. The RNAP catalytic core consists of 2 alpha, 1 beta, 1 beta' and 1 omega subunit. When a sigma factor is associated with the core the holoenzyme is formed, which can initiate transcription.

It carries out the reaction RNA(n) + a ribonucleoside 5'-triphosphate = RNA(n+1) + diphosphate. Functionally, DNA-dependent RNA polymerase catalyzes the transcription of DNA into RNA using the four ribonucleoside triphosphates as substrates. This is DNA-directed RNA polymerase subunit alpha from Caldicellulosiruptor bescii (strain ATCC BAA-1888 / DSM 6725 / KCTC 15123 / Z-1320) (Anaerocellum thermophilum).